An 816-amino-acid chain; its full sequence is Protein kinase C-binding protein NELL2 (816 aa).

The first 21 residues, 1-21 (MESRVLLRTFCLIFGLGAVWG), serve as a signal peptide directing secretion. Residues asparagine 53, asparagine 225, asparagine 293, and asparagine 298 are each glycosylated (N-linked (GlcNAc...) asparagine). Residues 64–228 (PRSIKASTAT…AQCPDLNRTC (165 aa)) form the Laminin G-like domain. A VWFC 1 domain is found at 272 to 331 (RTCTMKGTTYREFESWIDGCKNCTCLNGTIQCETLICPNPDCPLKSALAYVDGKCCKECK). Positions 397–439 (GYDFCSERHNCMENSICRNLNDRAVCSCRDGFRALREDNAYCE) constitute an EGF-like 1 domain. 3 disulfides stabilise this stretch: cysteine 401-cysteine 413, cysteine 407-cysteine 422, and cysteine 424-cysteine 438. Ca(2+)-binding residues include aspartate 440, isoleucine 441, and glutamate 443. The region spanning 440 to 481 (DIDECAEGRHYCRENTMCVNTPGSFMCICKTGYIRIDDYSCT) is the EGF-like 2; calcium-binding domain. Intrachain disulfides connect cysteine 444–cysteine 457, cysteine 451–cysteine 466, cysteine 468–cysteine 480, cysteine 486–cysteine 499, cysteine 493–cysteine 508, cysteine 510–cysteine 521, cysteine 525–cysteine 535, cysteine 529–cysteine 541, and cysteine 543–cysteine 552. Positions 459, 460, and 463 each coordinate Ca(2+). The region spanning 482-522 (EHDECITNQHNCDENALCFNTVGGHNCVCKPGYTGNGTTCK) is the EGF-like 3; calcium-binding domain. A glycan (N-linked (GlcNAc...) asparagine) is linked at asparagine 517. Residues 523-553 (AFCKDGCRNGGACIAANVCACPQGFTGPSCE) form the EGF-like 4 domain. O-linked (GlcNAc...) threonine glycosylation is present at threonine 548. The Ca(2+) site is built by aspartate 555, isoleucine 556, and glutamate 558. The EGF-like 5; calcium-binding domain maps to 555–601 (DIDECSDGFVQCDSRANCINLPGWYHCECRDGYHDNGMFSPSGESCE). Cystine bridges form between cysteine 559/cysteine 572, cysteine 566/cysteine 581, and cysteine 583/cysteine 600. Ca(2+)-binding residues include asparagine 574, leucine 575, and tryptophan 578. Ca(2+) is bound by residues aspartate 602, isoleucine 603, and glutamate 605. An EGF-like 6; calcium-binding domain is found at 602–637 (DIDECGTGRHSCANDTICFNLDGGYDCRCPHGKNCT). 3 disulfides stabilise this stretch: cysteine 606/cysteine 619, cysteine 613/cysteine 628, and cysteine 630/cysteine 636. An N-linked (GlcNAc...) asparagine glycan is attached at asparagine 615. Ca(2+) is bound by residues asparagine 621, leucine 622, and glycine 625. Asparagine 635 carries N-linked (GlcNAc...) asparagine glycosylation. VWFC domains follow at residues 638–693 (GDCI…PECD) and 698–756 (SQCL…PRCV).

Homotrimer. Binds to PRKCB. Interacts with NICOL1; this interaction triggers epididymal differentiation. Interacts (via the EGF domains) with ROBO3 (via Fibronectin type-III 1 domain) with a 3:3 stoichiometry; this interaction promotes oligomerization of ROBO3 resulting in the repulsion of commissural axons in the midline.

It is found in the secreted. Plays multiple roles in neural tissues, regulates neuronal proliferation, survival, differentiation, polarization, as well as axon guidance and synaptic functions. Plays an important role in axon development during neuronal differentiation through the MAPK intracellular signaling pathway. Via binding to its receptor ROBO3, plays a role in axon guidance, functioning as a repulsive axon guidance cue that contributes to commissural axon guidance to the midline. Required for neuron survival through the modulation of MAPK signaling pathways too. Involved in the regulation of hypothalamic GNRH secretion and the control of puberty. Its function is as follows. Epididymal-secreted protein that signals through a ROS1-pathway to regulate the epididymal initial segment (IS) maturation, sperm maturation and male fertility. This Homo sapiens (Human) protein is Protein kinase C-binding protein NELL2.